The sequence spans 95 residues: Co-chaperonin GroES (95 aa).

It belongs to the GroES chaperonin family. As to quaternary structure, heptamer of 7 subunits arranged in a ring. Interacts with the chaperonin GroEL.

It localises to the cytoplasm. Functionally, together with the chaperonin GroEL, plays an essential role in assisting protein folding. The GroEL-GroES system forms a nano-cage that allows encapsulation of the non-native substrate proteins and provides a physical environment optimized to promote and accelerate protein folding. GroES binds to the apical surface of the GroEL ring, thereby capping the opening of the GroEL channel. The chain is Co-chaperonin GroES from Ruegeria pomeroyi (strain ATCC 700808 / DSM 15171 / DSS-3) (Silicibacter pomeroyi).